The sequence spans 396 residues: Ornithine aminotransferase (396 aa).

Residue Lys-255 is modified to N6-(pyridoxal phosphate)lysine.

It belongs to the class-III pyridoxal-phosphate-dependent aminotransferase family. OAT subfamily. It depends on pyridoxal 5'-phosphate as a cofactor.

The protein resides in the cytoplasm. The catalysed reaction is a 2-oxocarboxylate + L-ornithine = L-glutamate 5-semialdehyde + an L-alpha-amino acid. The protein operates within amino-acid biosynthesis; L-proline biosynthesis; L-glutamate 5-semialdehyde from L-ornithine: step 1/1. Its function is as follows. Catalyzes the interconversion of ornithine to glutamate semialdehyde. This Bacillus cereus (strain Q1) protein is Ornithine aminotransferase.